The chain runs to 277 residues: Phosphoenolpyruvate synthase regulatory protein (277 aa).

157–164 (GVSRCGKT) is a binding site for ADP.

This sequence belongs to the pyruvate, phosphate/water dikinase regulatory protein family. PSRP subfamily.

The catalysed reaction is [pyruvate, water dikinase] + ADP = [pyruvate, water dikinase]-phosphate + AMP + H(+). It carries out the reaction [pyruvate, water dikinase]-phosphate + phosphate + H(+) = [pyruvate, water dikinase] + diphosphate. In terms of biological role, bifunctional serine/threonine kinase and phosphorylase involved in the regulation of the phosphoenolpyruvate synthase (PEPS) by catalyzing its phosphorylation/dephosphorylation. The chain is Phosphoenolpyruvate synthase regulatory protein from Escherichia fergusonii (strain ATCC 35469 / DSM 13698 / CCUG 18766 / IAM 14443 / JCM 21226 / LMG 7866 / NBRC 102419 / NCTC 12128 / CDC 0568-73).